Reading from the N-terminus, the 184-residue chain is Potassium-transporting ATPase KdpC subunit (184 aa).

The chain crosses the membrane as a helical span at residues 10–30; that stretch reads LTFLMVVLFAVIYPLAIYGIA.

The protein belongs to the KdpC family. In terms of assembly, the system is composed of three essential subunits: KdpA, KdpB and KdpC.

It is found in the cell inner membrane. In terms of biological role, part of the high-affinity ATP-driven potassium transport (or Kdp) system, which catalyzes the hydrolysis of ATP coupled with the electrogenic transport of potassium into the cytoplasm. This subunit acts as a catalytic chaperone that increases the ATP-binding affinity of the ATP-hydrolyzing subunit KdpB by the formation of a transient KdpB/KdpC/ATP ternary complex. In Flavobacterium psychrophilum (strain ATCC 49511 / DSM 21280 / CIP 103535 / JIP02/86), this protein is Potassium-transporting ATPase KdpC subunit.